The sequence spans 211 residues: Probable GTP-binding protein EngB (211 aa).

The 175-residue stretch at 30–204 folds into the EngB-type G domain; sequence EGFEVAFAGR…YTVLADWMEL (175 aa). Residues 38–45, 64–68, 82–85, 149–152, and 182–185 each bind GTP; these read GRSNAGKS, GRTQL, DLPG, TKAD, and LFSA. 2 residues coordinate Mg(2+): S45 and T66.

It belongs to the TRAFAC class TrmE-Era-EngA-EngB-Septin-like GTPase superfamily. EngB GTPase family. Mg(2+) serves as cofactor.

Necessary for normal cell division and for the maintenance of normal septation. This chain is Probable GTP-binding protein EngB, found in Pseudomonas savastanoi pv. phaseolicola (strain 1448A / Race 6) (Pseudomonas syringae pv. phaseolicola (strain 1448A / Race 6)).